The sequence spans 374 residues: MDSPCLVALLVFSFVIGSCFSDNPIDSCWRGDSNWAQNRMKLADCAVGFGSSTMGGKGGDLYTVTNSDDDPVNPAPGTLRYGATRDRPLWIIFSGNMNIKLKMPMYIAGYKTFDGRGAQVYIGNGGPCVFIKRVSNVIIHGLYLYGCSTSVLGNVLINESFGVEPVHPQDGDALTLRTATNIWIDHNSFSNSSDGLVDVTLTSTGVTISNNLFFNHHKVMLLGHDDAYSDDKSMKVTVAFNQFGPNCGQRMPRARYGLVHVANNNYDPWTIYAIGGSSNPTILSEGNSFTAPNESYKKQVTIRIGCKTSSSCSNWVWQSTQDVFYNGAYFVSSGKYEGGNIYTKKEAFNVENGNATPQLTKNAGVLTCSLSKRC.

A signal peptide spans 1-21 (MDSPCLVALLVFSFVIGSCFS). Intrachain disulfides connect C28/C45 and C128/C147. N158 carries N-linked (GlcNAc...) asparagine glycosylation. D170 provides a ligand contact to Ca(2+). N-linked (GlcNAc...) (complex) asparagine glycosylation occurs at N191. Positions 194 and 198 each coordinate Ca(2+). R250 is an active-site residue. The N-linked (GlcNAc...) asparagine glycan is linked to N293. C306 and C312 are oxidised to a cystine. N-linked (GlcNAc...) (complex) asparagine glycosylation occurs at N354.

This sequence belongs to the polysaccharide lyase 1 family. Amb a subfamily. Ca(2+) serves as cofactor. Post-translationally, N-glycosylated; contains fucose and xylose.

The enzyme catalyses Eliminative cleavage of (1-&gt;4)-alpha-D-galacturonan to give oligosaccharides with 4-deoxy-alpha-D-galact-4-enuronosyl groups at their non-reducing ends.. It functions in the pathway glycan metabolism; pectin degradation; 2-dehydro-3-deoxy-D-gluconate from pectin: step 2/5. Functionally, has pectate lyase activity. In Cryptomeria japonica (Japanese cedar), this protein is Pectate lyase 1.